We begin with the raw amino-acid sequence, 383 residues long: Retrovirus-related Pol polyprotein from type-1 retrotransposable element R1 3 (383 aa).

Residues 1–88 (VDAFADDLLL…DRVRYLGVNV (88 aa)) form the Reverse transcriptase domain. The interval 229-383 (LSLHECRELV…VQRMRENEES (155 aa)) is nucleic acid-binding endonuclease.

The enzyme catalyses DNA(n) + a 2'-deoxyribonucleoside 5'-triphosphate = DNA(n+1) + diphosphate. This Nasonia vitripennis (Parasitic wasp) protein is Retrovirus-related Pol polyprotein from type-1 retrotransposable element R1 3.